We begin with the raw amino-acid sequence, 749 residues long: Protein SEY1 homolog 2 (749 aa).

The Cytoplasmic segment spans residues 1-671 (MIKNYGDRYH…QKHKQDFLQN (671 aa)). The region spanning 40–265 (GKNYNIVSII…YEKNVRWSDM (226 aa)) is the GB1/RHD3-type G domain. Residue 50 to 57 (GSQSTGKS) participates in GTP binding. Residues 445 to 465 (NQLKAFVEAQLATFKQQLDNI) adopt a coiled-coil conformation. A helical membrane pass occupies residues 672-692 (IPKPFWFLLLFFMYDDVLRWM). Residues 693–695 (GNP) are Lumenal-facing. The helical transmembrane segment at 696–716 (LFLYPILIILCFVGFCIAIGL) threads the bilayer. At 717–749 (HSLPKLAFQWVFRTLNQAVIPIIFGGISKLKGS) the chain is on the cytoplasmic side.

It belongs to the TRAFAC class dynamin-like GTPase superfamily. GB1/RHD3 GTPase family. RHD3 subfamily.

It localises to the endoplasmic reticulum membrane. In terms of biological role, probable GTP-binding protein that may be involved in cell development. This chain is Protein SEY1 homolog 2, found in Paramecium tetraurelia.